The chain runs to 93 residues: Small ribosomal subunit protein uS19 (93 aa).

It belongs to the universal ribosomal protein uS19 family.

Protein S19 forms a complex with S13 that binds strongly to the 16S ribosomal RNA. This is Small ribosomal subunit protein uS19 from Lawsonia intracellularis (strain PHE/MN1-00).